A 904-amino-acid polypeptide reads, in one-letter code: Protein translocase subunit SecA (904 aa).

ATP is bound by residues glutamine 87, 105–109 (GEGKT), and aspartate 507. The segment at 865–887 (GEGAEAAGQQPADAGPKIGRNDP) is disordered. The span at 868–880 (AEAAGQQPADAGP) shows a compositional bias: low complexity. 4 residues coordinate Zn(2+): cysteine 888, cysteine 890, cysteine 899, and histidine 900.

Belongs to the SecA family. Monomer and homodimer. Part of the essential Sec protein translocation apparatus which comprises SecA, SecYEG and auxiliary proteins SecDF-YajC and YidC. Requires Zn(2+) as cofactor.

Its subcellular location is the cell inner membrane. It localises to the cytoplasm. It catalyses the reaction ATP + H2O + cellular proteinSide 1 = ADP + phosphate + cellular proteinSide 2.. Part of the Sec protein translocase complex. Interacts with the SecYEG preprotein conducting channel. Has a central role in coupling the hydrolysis of ATP to the transfer of proteins into and across the cell membrane, serving both as a receptor for the preprotein-SecB complex and as an ATP-driven molecular motor driving the stepwise translocation of polypeptide chains across the membrane. The protein is Protein translocase subunit SecA of Dechloromonas aromatica (strain RCB).